The chain runs to 469 residues: 2-amino-4-ketopentanoate thiolase beta subunit (469 aa).

Lys102 carries the post-translational modification N6-(pyridoxal phosphate)lysine. Pyridoxal 5'-phosphate contacts are provided by residues Asn128 and 238-242 (AGGGN).

The protein belongs to the threonine synthase family. Heterodimer with OrtA. The cofactor is pyridoxal 5'-phosphate.

It carries out the reaction D-alanine + acetyl-CoA = (2R)-2-amino-4-oxopentanoate + CoA. With respect to regulation, completely inhibited by p-chloromercuribenzoate (p-ClHgBzO) and acetyl-CoA, and partially inhibited by N-ethylmaleimide. Involved in the ornithine fermentation pathway. Catalyzes the thiolytic cleavage of 2-amino-4-ketopentanoate (AKP) with coenzyme A (CoA) to form acetyl-CoA and alanine. It is strictly specific for AKP. This chain is 2-amino-4-ketopentanoate thiolase beta subunit, found in Acetoanaerobium sticklandii (strain ATCC 12662 / DSM 519 / JCM 1433 / CCUG 9281 / NCIMB 10654 / HF) (Clostridium sticklandii).